The following is a 180-amino-acid chain: Bifunctional protein PyrR (180 aa).

The PRPP-binding signature appears at Val101 to Thr113.

Belongs to the purine/pyrimidine phosphoribosyltransferase family. PyrR subfamily. Homodimer and homohexamer; in equilibrium.

It carries out the reaction UMP + diphosphate = 5-phospho-alpha-D-ribose 1-diphosphate + uracil. Functionally, regulates transcriptional attenuation of the pyrimidine nucleotide (pyr) operon by binding in a uridine-dependent manner to specific sites on pyr mRNA. This disrupts an antiterminator hairpin in the RNA and favors formation of a downstream transcription terminator, leading to a reduced expression of downstream genes. In terms of biological role, also displays a weak uracil phosphoribosyltransferase activity which is not physiologically significant. This chain is Bifunctional protein PyrR, found in Bacillus cytotoxicus (strain DSM 22905 / CIP 110041 / 391-98 / NVH 391-98).